We begin with the raw amino-acid sequence, 311 residues long: Mediator of RNA polymerase II transcription subunit 27 (311 aa).

The residue at position 132 (Ser132) is a Phosphoserine. N6-methyllysine is present on Lys134.

The protein belongs to the Mediator complex subunit 27 family. As to quaternary structure, component of the Mediator complex, which is composed of MED1, MED4, MED6, MED7, MED8, MED9, MED10, MED11, MED12, MED13, MED13L, MED14, MED15, MED16, MED17, MED18, MED19, MED20, MED21, MED22, MED23, MED24, MED25, MED26, MED27, MED29, MED30, MED31, CCNC, CDK8 and CDC2L6/CDK11. The MED12, MED13, CCNC and CDK8 subunits form a distinct module termed the CDK8 module. Mediator containing the CDK8 module is less active than Mediator lacking this module in supporting transcriptional activation. Individual preparations of the Mediator complex lacking one or more distinct subunits have been variously termed ARC, CRSP, DRIP, PC2, SMCC and TRAP.

The protein resides in the nucleus. Functionally, component of the Mediator complex, a coactivator involved in the regulated transcription of nearly all RNA polymerase II-dependent genes. Mediator functions as a bridge to convey information from gene-specific regulatory proteins to the basal RNA polymerase II transcription machinery. Mediator is recruited to promoters by direct interactions with regulatory proteins and serves as a scaffold for the assembly of a functional preinitiation complex with RNA polymerase II and the general transcription factors. This chain is Mediator of RNA polymerase II transcription subunit 27 (MED27), found in Homo sapiens (Human).